We begin with the raw amino-acid sequence, 97 residues long: ESAT-6-like protein EsxA (97 aa).

The protein belongs to the WXG100 family. ESAT-6 subfamily. Forms a tight 1:1 complex with EsxB. Forms a complex with EccC and EsxB, probably wholly mediated by EsxB.

The protein localises to the secreted. Functionally, may help regulate assembly and function of the type VII secretion system (T7SS). EsxA disassembles pre-formed EccC-EsxB multimers, possibly by making EccC-EsxA-EsxB trimers instead of EccC-EsxB-EsxB-EccC tetramers. This is ESAT-6-like protein EsxA from Thermomonospora curvata (strain ATCC 19995 / DSM 43183 / JCM 3096 / KCTC 9072 / NBRC 15933 / NCIMB 10081 / Henssen B9).